A 322-amino-acid chain; its full sequence is Gas vesicle protein L (322 aa).

Residues 1–85 (MTEQSSGSAT…SEQATVDWST (85 aa)) are disordered. Basic and acidic residues predominate over residues 17-36 (ETAKQETGRKNEQPEERTVT). The span at 45–57 (INTTTAESETGSE) shows a compositional bias: polar residues. Residues 58 to 72 (QESKAGSEQESKAGS) show a composition bias toward basic and acidic residues. Over residues 73–85 (EQESEQATVDWST) the composition is skewed to polar residues.

Belongs to the gas vesicle GvpF/GvpL family. As to quaternary structure, gvpF to GvpM interact with each other in vitro, and may form multi-subunit complex(es). Interacts with GvpC, GvpN and GvpO.

The protein resides in the gas vesicle. Functionally, proteins GvpF to GvpM might be involved in nucleating gas vesicle formation. A minor component of the gas vesicle. Gas vesicles are small, hollow, gas filled protein structures that are found in several microbial planktonic microorganisms. They allow positioning of halobacteria at the optimal depth for growth in the poorly aerated, shallow brine pools of their habitat. Expression of a 9.5 kb mc-vac DNA fragment containing 2 divergently transcribed regions (gvpD-gvpE-gvpF-gvpG-gvpH-gvpI-gvpJ-gvpK-gvpL-gvpM and gvpA-gvpC-gvpN-gvpO) allows H.volcanii to produce gas vesicles. This chain is Gas vesicle protein L, found in Haloferax mediterranei (strain ATCC 33500 / DSM 1411 / JCM 8866 / NBRC 14739 / NCIMB 2177 / R-4) (Halobacterium mediterranei).